The chain runs to 56 residues: Small ribosomal subunit protein uS14 (56 aa).

Zn(2+)-binding residues include Cys-21, Cys-24, Cys-39, and Cys-42.

It belongs to the universal ribosomal protein uS14 family. Component of the 40S small ribosomal subunit. The cofactor is Zn(2+).

It is found in the cytoplasm. The protein localises to the cytosol. Its subcellular location is the rough endoplasmic reticulum. This Lysiphlebus testaceipes (Greenbugs aphid parastoid) protein is Small ribosomal subunit protein uS14 (RpS29).